We begin with the raw amino-acid sequence, 338 residues long: Methionine import ATP-binding protein MetN 1 (338 aa).

The ABC transporter domain occupies 2–241; that stretch reads IELHQVSKSF…AKHATTKRFV (240 aa). 38 to 45 lines the ATP pocket; sequence GYSGAGKS.

It belongs to the ABC transporter superfamily. Methionine importer (TC 3.A.1.24) family. The complex is composed of two ATP-binding proteins (MetN), two transmembrane proteins (MetI) and a solute-binding protein (MetQ).

The protein localises to the cell membrane. The enzyme catalyses L-methionine(out) + ATP + H2O = L-methionine(in) + ADP + phosphate + H(+). It carries out the reaction D-methionine(out) + ATP + H2O = D-methionine(in) + ADP + phosphate + H(+). Its function is as follows. Part of the ABC transporter complex MetNIQ involved in methionine import. Responsible for energy coupling to the transport system. This is Methionine import ATP-binding protein MetN 1 from Listeria monocytogenes serotype 4b (strain F2365).